A 940-amino-acid polypeptide reads, in one-letter code: Protein translocase subunit SecA (940 aa).

ATP-binding positions include Gln-86, 104–108 (GEGKT), and Asp-494. The interval 884–940 (ATAKAQKDQQAEDAVLVGEDEPETPQGPPARGAFGQPTGASSAPQNREERRKADRRK) is disordered. Basic and acidic residues predominate over residues 929 to 940 (NREERRKADRRK).

The protein belongs to the SecA family. As to quaternary structure, monomer and homodimer. Part of the essential Sec protein translocation apparatus which comprises SecA, SecYEG and auxiliary proteins SecDF. Other proteins may also be involved.

The protein localises to the cell membrane. Its subcellular location is the cytoplasm. The enzyme catalyses ATP + H2O + cellular proteinSide 1 = ADP + phosphate + cellular proteinSide 2.. Functionally, part of the Sec protein translocase complex. Interacts with the SecYEG preprotein conducting channel. Has a central role in coupling the hydrolysis of ATP to the transfer of proteins into and across the cell membrane, serving as an ATP-driven molecular motor driving the stepwise translocation of polypeptide chains across the membrane. The polypeptide is Protein translocase subunit SecA (Clavibacter sepedonicus (Clavibacter michiganensis subsp. sepedonicus)).